We begin with the raw amino-acid sequence, 208 residues long: Small ribosomal subunit protein uS4 (208 aa).

The interval 28-48 is disordered; sequence YFEKRPYPPGEHGRARRRTES. One can recognise an S4 RNA-binding domain in the interval 95-159; that stretch reads MRLDALVLRS…ARTPFQVAAA (65 aa).

The protein belongs to the universal ribosomal protein uS4 family. In terms of assembly, part of the 30S ribosomal subunit. Contacts protein S5. The interaction surface between S4 and S5 is involved in control of translational fidelity.

In terms of biological role, one of the primary rRNA binding proteins, it binds directly to 16S rRNA where it nucleates assembly of the body of the 30S subunit. With S5 and S12 plays an important role in translational accuracy. The sequence is that of Small ribosomal subunit protein uS4 from Beutenbergia cavernae (strain ATCC BAA-8 / DSM 12333 / CCUG 43141 / JCM 11478 / NBRC 16432 / NCIMB 13614 / HKI 0122).